Here is a 388-residue protein sequence, read N- to C-terminus: GTPase Obg (388 aa).

The region spanning Met1–Leu159 is the Obg domain. The OBG-type G domain maps to Ala160 to Glu333. GTP-binding positions include Gly166–Ser173, Phe191–Ile195, Asp213–Gly216, Asn283–Asp286, and Ser314–Val316. Residues Ser173 and Thr193 each coordinate Mg(2+). Residues Asn359–Asp380 are disordered. Over residues Ile364–Asp380 the composition is skewed to acidic residues.

It belongs to the TRAFAC class OBG-HflX-like GTPase superfamily. OBG GTPase family. As to quaternary structure, monomer. Mg(2+) is required as a cofactor.

Its subcellular location is the cytoplasm. An essential GTPase which binds GTP, GDP and possibly (p)ppGpp with moderate affinity, with high nucleotide exchange rates and a fairly low GTP hydrolysis rate. Plays a role in control of the cell cycle, stress response, ribosome biogenesis and in those bacteria that undergo differentiation, in morphogenesis control. The protein is GTPase Obg of Vibrio vulnificus (strain YJ016).